Consider the following 447-residue polypeptide: C4-dicarboxylate transport protein (447 aa).

Transmembrane regions (helical) follow at residues Ile-19 to Pro-39, Leu-55 to Leu-75, Ile-90 to Val-110, Ala-155 to Leu-175, Leu-199 to Ile-219, Met-232 to Val-252, Leu-343 to Ile-363, and Ala-366 to Val-386.

This sequence belongs to the dicarboxylate/amino acid:cation symporter (DAACS) (TC 2.A.23) family.

Its subcellular location is the cell inner membrane. In terms of biological role, responsible for the transport of dicarboxylates such as succinate, fumarate, and malate from the periplasm across the membrane. The protein is C4-dicarboxylate transport protein of Rhodospirillum rubrum (strain ATCC 11170 / ATH 1.1.1 / DSM 467 / LMG 4362 / NCIMB 8255 / S1).